The chain runs to 141 residues: Putative nickel-responsive regulator (141 aa).

Ni(2+) is bound by residues His80, His91, His93, and Cys99.

It belongs to the transcriptional regulatory CopG/NikR family. Ni(2+) is required as a cofactor.

In terms of biological role, transcriptional regulator. This is Putative nickel-responsive regulator from Methanococcus maripaludis (strain C7 / ATCC BAA-1331).